A 369-amino-acid polypeptide reads, in one-letter code: Chorismate synthase (369 aa).

2 residues coordinate NADP(+): arginine 48 and arginine 54. Residues 125–127 (RSS), 238–239 (NA), glycine 278, 293–297 (KPTSS), and arginine 319 each bind FMN.

Belongs to the chorismate synthase family. In terms of assembly, homotetramer. The cofactor is FMNH2.

The enzyme catalyses 5-O-(1-carboxyvinyl)-3-phosphoshikimate = chorismate + phosphate. It participates in metabolic intermediate biosynthesis; chorismate biosynthesis; chorismate from D-erythrose 4-phosphate and phosphoenolpyruvate: step 7/7. In terms of biological role, catalyzes the anti-1,4-elimination of the C-3 phosphate and the C-6 proR hydrogen from 5-enolpyruvylshikimate-3-phosphate (EPSP) to yield chorismate, which is the branch point compound that serves as the starting substrate for the three terminal pathways of aromatic amino acid biosynthesis. This reaction introduces a second double bond into the aromatic ring system. This chain is Chorismate synthase, found in Nitrosococcus oceani (strain ATCC 19707 / BCRC 17464 / JCM 30415 / NCIMB 11848 / C-107).